The sequence spans 422 residues: UDP-N-acetylglucosamine 1-carboxyvinyltransferase (422 aa).

22 to 23 (KN) provides a ligand contact to phosphoenolpyruvate. Arginine 93 lines the UDP-N-acetyl-alpha-D-glucosamine pocket. Catalysis depends on cysteine 117, which acts as the Proton donor. Cysteine 117 bears the 2-(S-cysteinyl)pyruvic acid O-phosphothioketal mark. UDP-N-acetyl-alpha-D-glucosamine-binding positions include 122-126 (RPVDL), aspartate 308, and leucine 330.

It belongs to the EPSP synthase family. MurA subfamily.

The protein resides in the cytoplasm. The enzyme catalyses phosphoenolpyruvate + UDP-N-acetyl-alpha-D-glucosamine = UDP-N-acetyl-3-O-(1-carboxyvinyl)-alpha-D-glucosamine + phosphate. It participates in cell wall biogenesis; peptidoglycan biosynthesis. Cell wall formation. Adds enolpyruvyl to UDP-N-acetylglucosamine. This Helicobacter pylori (strain J99 / ATCC 700824) (Campylobacter pylori J99) protein is UDP-N-acetylglucosamine 1-carboxyvinyltransferase.